Here is a 614-residue protein sequence, read N- to C-terminus: Pentatricopeptide repeat-containing protein At1g63080, mitochondrial (614 aa).

Residues Met-1–Phe-7 constitute a mitochondrion transit peptide. PPR repeat units follow at residues Ser-64–His-98, Asn-99–Pro-133, Ser-134–Pro-168, Asp-169–Pro-203, Asp-204–Ala-238, Asp-239–Pro-273, Asp-274–Pro-308, Asn-309–Pro-343, Asn-344–Pro-378, Asp-379–Gly-413, Asn-414–Pro-448, Asn-449–Pro-483, Asp-484–Pro-518, Asp-519–Pro-553, and Asp-554–Gly-588.

This sequence belongs to the PPR family. P subfamily.

The protein resides in the mitochondrion. The polypeptide is Pentatricopeptide repeat-containing protein At1g63080, mitochondrial (Arabidopsis thaliana (Mouse-ear cress)).